Consider the following 68-residue polypeptide: Beta-defensin 1 (68 aa).

Residues 1 to 21 (MRTSYLLLFTLCLLMSEMASG) form the signal peptide. Positions 22 to 32 (DNFLTGLGHRS) are excised as a propeptide. 3 cysteine pairs are disulfide-bonded: Cys-37–Cys-66, Cys-44–Cys-59, and Cys-49–Cys-67.

Belongs to the beta-defensin family. In terms of assembly, monomer. Homodimer.

It is found in the secreted. The protein localises to the membrane. Has bactericidal activity. May act as a ligand for C-C chemokine receptor CCR6. Positively regulates the sperm motility and bactericidal activity in a CCR6-dependent manner. Binds to CCR6 and triggers Ca2+ mobilization in the sperm which is important for its motility. In Presbytis melalophos (Mitred leaf monkey), this protein is Beta-defensin 1 (DEFB1).